The following is a 156-amino-acid chain: Arginine repressor (156 aa).

Belongs to the ArgR family.

It is found in the cytoplasm. It participates in amino-acid biosynthesis; L-arginine biosynthesis [regulation]. Regulates arginine biosynthesis genes. This is Arginine repressor from Vibrio atlanticus (strain LGP32) (Vibrio splendidus (strain Mel32)).